A 33-amino-acid chain; its full sequence is Cytochrome b6-f complex subunit 8 (33 aa).

A helical transmembrane segment spans residues 2-22 (IFQIGWAALAAIFTFSIAMVV).

This sequence belongs to the PetN family. The 4 large subunits of the cytochrome b6-f complex are cytochrome b6, subunit IV (17 kDa polypeptide, PetD), cytochrome f and the Rieske protein, while the 4 small subunits are PetG, PetL, PetM and PetN. The complex functions as a dimer.

The protein resides in the cellular thylakoid membrane. Its function is as follows. Component of the cytochrome b6-f complex, which mediates electron transfer between photosystem II (PSII) and photosystem I (PSI), cyclic electron flow around PSI, and state transitions. This is Cytochrome b6-f complex subunit 8 from Prochlorococcus marinus (strain MIT 9301).